Here is a 366-residue protein sequence, read N- to C-terminus: MNQTGRTIGGPQNGVNTVINPFRVSPSEDRVSSRDETPRNYNNPFLNEDDTRRAHNSSVSNSRQERLPSYEEAAGTPKQQAPYPKEKKRSSGSNSHQHNHHHHRRTSHGHRDKDKQKSKSRTKVKPPKNVDTIDKMDVTGLFGGSFHHDGPFDACTPQRNKNNKVAPVLAFPADGPNNTVGGRTSKKSTLDEVFGRETVDDDSETLNQLQDRAYLFNKANSSTTTLDAIKPNSKNITQFDSKMKTELVHGPITMGLGSTTFLDGAPASSAAIEQDVINHAQESRRKNSIARKKSLPSRRHLQVNNNNLKLVKTHSGHLEQKDVDDNRTSVPVTATQGSGHEDVVKKENTGNKLLRRVKSLKTSKKH.

Residues 1-135 (MNQTGRTIGG…PPKNVDTIDK (135 aa)) form a disordered region. Residues 26–38 (PSEDRVSSRDETP) show a composition bias toward basic and acidic residues. At serine 69 the chain carries Phosphoserine. Threonine 76 bears the Phosphothreonine mark. Lysine 78 is covalently cross-linked (Glycyl lysine isopeptide (Lys-Gly) (interchain with G-Cter in ubiquitin)). The segment covering 97–108 (QHNHHHHRRTSH) has biased composition (basic residues). Residue lysine 187 forms a Glycyl lysine isopeptide (Lys-Gly) (interchain with G-Cter in ubiquitin) linkage. Threonine 189 carries the post-translational modification Phosphothreonine. Lysine 242 is covalently cross-linked (Glycyl lysine isopeptide (Lys-Gly) (interchain with G-Cter in ubiquitin)). 2 positions are modified to phosphoserine: serine 288 and serine 294. The tract at residues 313 to 366 (THSGHLEQKDVDDNRTSVPVTATQGSGHEDVVKKENTGNKLLRRVKSLKTSKKH) is disordered. Residues 316–327 (GHLEQKDVDDNR) show a composition bias toward basic and acidic residues. Polar residues predominate over residues 328 to 338 (TSVPVTATQGS). Over residues 339–349 (GHEDVVKKENT) the composition is skewed to basic and acidic residues. Basic residues predominate over residues 353–366 (LLRRVKSLKTSKKH). Residue serine 359 is modified to Phosphoserine.

It belongs to the pal1 family.

The protein resides in the cytoplasm. The protein localises to the nucleus. This is an uncharacterized protein from Saccharomyces cerevisiae (strain ATCC 204508 / S288c) (Baker's yeast).